The chain runs to 854 residues: Putative COX1/OXI3 intron 2 protein (854 aa).

The Reverse transcriptase domain maps to 329–613; sequence LSKDINTNMF…EGVSFLGYDV (285 aa).

The protein resides in the mitochondrion. This is Putative COX1/OXI3 intron 2 protein (AI2) from Saccharomyces cerevisiae (strain ATCC 204508 / S288c) (Baker's yeast).